A 462-amino-acid polypeptide reads, in one-letter code: uncharacterized protein (462 aa).

Positions 12–70 constitute a TRAM domain; sequence MLKKNDIIQVAISDLSHEGAGVAKHDGFVFFVDNALPEEVIDMRVLKVNKNSGFGKVEA. Positions 294, 323, 344, and 392 each coordinate S-adenosyl-L-methionine. Catalysis depends on Cys419, which acts as the Nucleophile.

The protein belongs to the class I-like SAM-binding methyltransferase superfamily. RNA M5U methyltransferase family.

This is an uncharacterized protein from Streptococcus pyogenes serotype M3 (strain ATCC BAA-595 / MGAS315).